The primary structure comprises 156 residues: Small ribosomal subunit protein bS16 (156 aa).

Low complexity-rich tracts occupy residues 113 to 123 (AESGTTAAATT) and 137 to 156 (EAPAEAAEAPAEAADAASES). The interval 113-156 (AESGTTAAATTPKKKKAPKKDEAAEAPAEAAEAPAEAADAASES) is disordered.

This sequence belongs to the bacterial ribosomal protein bS16 family.

In Mycolicibacterium smegmatis (strain ATCC 700084 / mc(2)155) (Mycobacterium smegmatis), this protein is Small ribosomal subunit protein bS16.